Here is a 416-residue protein sequence, read N- to C-terminus: N-acetyl-L-cysteine deacetylase (416 aa).

Positions 128, 130, 164, 188, and 380 each coordinate Zn(2+).

The protein belongs to the peptidase M20 family. Zn(2+) serves as cofactor. The cofactor is Co(2+).

The enzyme catalyses N-acetyl-L-cysteine + H2O = L-cysteine + acetate. The protein operates within amino-acid metabolism. Functionally, involved in a cysteine salvage pathway from S-alkylcysteine. Catalyzes the last step in this pathway, i.e. the deacetylation of N-acetyl-L-cysteine. This pathway is likely important in the catabolism of alkylated cysteine generated by proteolysis of alkylated glutathione formed in the detoxification of a wide range of electrophiles. The sequence is that of N-acetyl-L-cysteine deacetylase from Bacillus subtilis (strain 168).